The chain runs to 307 residues: Phosphoribosylaminoimidazole-succinocarboxamide synthase (307 aa).

It belongs to the SAICAR synthetase family.

It catalyses the reaction 5-amino-1-(5-phospho-D-ribosyl)imidazole-4-carboxylate + L-aspartate + ATP = (2S)-2-[5-amino-1-(5-phospho-beta-D-ribosyl)imidazole-4-carboxamido]succinate + ADP + phosphate + 2 H(+). Its pathway is purine metabolism; IMP biosynthesis via de novo pathway; 5-amino-1-(5-phospho-D-ribosyl)imidazole-4-carboxamide from 5-amino-1-(5-phospho-D-ribosyl)imidazole-4-carboxylate: step 1/2. The protein is Phosphoribosylaminoimidazole-succinocarboxamide synthase of Thermobifida fusca (strain YX).